The primary structure comprises 302 residues: Taste receptor type 2 member 104 (302 aa).

Residues M1–S7 lie on the Extracellular side of the membrane. Residues I8–V28 traverse the membrane as a helical segment. The Cytoplasmic segment spans residues L29 to K43. A helical membrane pass occupies residues I44 to L64. Residues D65 to Y87 lie on the Extracellular side of the membrane. The chain crosses the membrane as a helical span at residues I88 to F108. At L109–K128 the chain is on the cytoplasmic side. A helical membrane pass occupies residues V129–V149. The Extracellular portion of the chain corresponds to T150–M182. N-linked (GlcNAc...) asparagine glycosylation is found at N160 and N161. Residues G183–W203 form a helical membrane-spanning segment. The Cytoplasmic portion of the chain corresponds to R204–S233. A helical membrane pass occupies residues F234–L254. Over T255–N257 the chain is Extracellular. Residues I258–I278 traverse the membrane as a helical segment. Over L279–T302 the chain is Cytoplasmic.

Belongs to the G-protein coupled receptor T2R family.

It localises to the membrane. Its function is as follows. Putative taste receptor which may play a role in the perception of bitterness. The sequence is that of Taste receptor type 2 member 104 from Rattus norvegicus (Rat).